Reading from the N-terminus, the 256-residue chain is Major prion protein 2 (256 aa).

The signal sequence occupies residues 1 to 24 (MVKSHIGSWILVLFVAMWSDVALC). The interaction with GRB2, ERI3 and SYN1 stretch occupies residues 25-233 (KKRPKPGGGW…ESEAYYQRGA (209 aa)). The interval 28–110 (PKPGGGWNTG…QWNKPSKPKT (83 aa)) is disordered. 5 tandem repeats follow at residues 54–62 (PQEGGDWGQ), 63–70 (PHGGGWGQ), 71–78 (PHVGGWGQ), 79–86 (PHGGGWGQ), and 87–95 (PHGGGGWGQ). The tract at residues 54-95 (PQEGGDWGQPHGGGWGQPHVGGWGQPHGGGWGQPHGGGGWGQ) is 5 X 8 AA tandem repeats of P-H-G-G-G-W-G-Q. Positions 58–99 (GDWGQPHGGGWGQPHVGGWGQPHGGGWGQPHGGGGWGQGGTH) are enriched in gly residues. Cu(2+) is bound by residues His-64, Gly-65, Gly-66, His-72, Gly-74, His-80, Gly-81, Gly-82, His-88, Gly-90, and Gly-91. Cys-182 and Cys-217 are disulfide-bonded. Asn-184 and Asn-200 each carry an N-linked (GlcNAc...) asparagine glycan. A lipid anchor (GPI-anchor amidated alanine) is attached at Ala-233. The propeptide at 234–256 (SVILFSSPPVILLISFLIFLIVG) is removed in mature form.

Belongs to the prion family. In terms of assembly, monomer and homodimer. Has a tendency to aggregate into amyloid fibrils containing a cross-beta spine, formed by a steric zipper of superposed beta-strands. Soluble oligomers may represent an intermediate stage on the path to fibril formation. Copper binding may promote oligomerization. Interacts with GRB2, APP, ERI3/PRNPIP and SYN1. Mislocalized cytosolically exposed PrP interacts with MGRN1; this interaction alters MGRN1 subcellular location and causes lysosomal enlargement. Interacts with KIAA1191.

Its subcellular location is the cell membrane. The protein resides in the golgi apparatus. In terms of biological role, its primary physiological function is unclear. Has cytoprotective activity against internal or environmental stresses. May play a role in neuronal development and synaptic plasticity. May be required for neuronal myelin sheath maintenance. May play a role in iron uptake and iron homeostasis. Soluble oligomers are toxic to cultured neuroblastoma cells and induce apoptosis (in vitro). Association with GPC1 (via its heparan sulfate chains) targets PRNP to lipid rafts. Also provides Cu(2+) or Zn(2+) for the ascorbate-mediated GPC1 deaminase degradation of its heparan sulfate side chains. This is Major prion protein 2 from Tragelaphus strepsiceros (Greater kudu).